A 252-amino-acid chain; its full sequence is Chitooligosaccharide deacetylase (252 aa).

Residues His-61 and His-125 each contribute to the Mg(2+) site.

Belongs to the YdjC deacetylase family. ChbG subfamily. As to quaternary structure, homodimer. The cofactor is Mg(2+).

It is found in the cytoplasm. It carries out the reaction N,N'-diacetylchitobiose + H2O = N-acetyl-beta-D-glucosaminyl-(1-&gt;4)-D-glucosamine + acetate. It catalyses the reaction diacetylchitobiose-6'-phosphate + H2O = N'-monoacetylchitobiose-6'-phosphate + acetate. The protein operates within glycan degradation; chitin degradation. Its function is as follows. Involved in the degradation of chitin. ChbG is essential for growth on the acetylated chitooligosaccharides chitobiose and chitotriose but is dispensable for growth on cellobiose and chitosan dimer, the deacetylated form of chitobiose. Deacetylation of chitobiose-6-P and chitotriose-6-P is necessary for both the activation of the chb promoter by the regulatory protein ChbR and the hydrolysis of phosphorylated beta-glucosides by the phospho-beta-glucosidase ChbF. Catalyzes the removal of only one acetyl group from chitobiose-6-P to yield monoacetylchitobiose-6-P, the inducer of ChbR and the substrate of ChbF. The chain is Chitooligosaccharide deacetylase from Salmonella paratyphi C (strain RKS4594).